Here is a 245-residue protein sequence, read N- to C-terminus: MTRMKYLVAAATLSLFLAGCSGSKEEVPDNPPNEIYATAQQKLQDGNWRQAITQLEALDNRYPFGPYSQQVQLDLIYAYYKNADLPLAQAAIDRFIRLNPTHPNIDYVMYMRGLTNMALDDSALQGFFGVDRSDRDPQHARAAFSDFSKLVRGYPNSQYTTDATKRLVFLKDRLAKYEYSVAEYYTERGAWVAVVNRVEGMLRDYPDTQATRDALPLMENAYRQMQMNAQAEKVAKIIAANSSNT.

The signal sequence occupies residues 1 to 19; the sequence is MTRMKYLVAAATLSLFLAG. Cys-20 is lipidated: N-palmitoyl cysteine. Cys-20 is lipidated: S-diacylglycerol cysteine.

This sequence belongs to the BamD family. Part of the Bam complex, which is composed of the outer membrane protein BamA, and four lipoproteins BamB, BamC, BamD and BamE.

The protein resides in the cell outer membrane. In terms of biological role, part of the outer membrane protein assembly complex, which is involved in assembly and insertion of beta-barrel proteins into the outer membrane. Constitutes, with BamA, the core component of the assembly machinery. In Escherichia coli O157:H7, this protein is Outer membrane protein assembly factor BamD.